Consider the following 120-residue polypeptide: Large ribosomal subunit protein bL19 (120 aa).

It belongs to the bacterial ribosomal protein bL19 family.

This protein is located at the 30S-50S ribosomal subunit interface and may play a role in the structure and function of the aminoacyl-tRNA binding site. The sequence is that of Large ribosomal subunit protein bL19 from Chlorobium luteolum (strain DSM 273 / BCRC 81028 / 2530) (Pelodictyon luteolum).